Reading from the N-terminus, the 516-residue chain is Lysophosphatidylcholine acyltransferase 2B (516 aa).

N-linked (GlcNAc...) asparagine glycosylation occurs at Asn28. The next 3 membrane-spanning stretches (helical) occupy residues 44 to 64 (THLS…LVPV), 68 to 88 (CIVF…INLP), and 102 to 122 (LIKS…GFLV). Residues 142–147 (HSTFFD) carry the HXXXXD motif motif. EF-hand domains follow at residues 387-422 (PISE…LCNP) and 424-459 (NTEK…AFGV). The Ca(2+) site is built by Asp400, Asn402, Asp404, Thr406, Glu411, Asp437, Asp439, Asp441, Tyr443, and Glu448.

This sequence belongs to the 1-acyl-sn-glycerol-3-phosphate acyltransferase family.

The protein localises to the membrane. Its pathway is lipid metabolism; phospholipid metabolism. Probable acetyltransferase. This chain is Lysophosphatidylcholine acyltransferase 2B (Lpcat2b), found in Mus musculus (Mouse).